Consider the following 524-residue polypeptide: Alkaline phosphatase, tissue-nonspecific isozyme (524 aa).

An N-terminal signal peptide occupies residues methionine 1–serine 17. Aspartate 60 provides a ligand contact to Mg(2+). 2 residues coordinate Zn(2+): aspartate 60 and serine 110. Serine 110 functions as the Phosphoserine intermediate in the catalytic mechanism. Serine 110 carries the post-translational modification Phosphoserine. A disulfide bridge connects residues cysteine 139 and cysteine 201. Asparagine 140 carries N-linked (GlcNAc...) asparagine glycosylation. A Mg(2+)-binding site is contributed by threonine 173. A glycan (N-linked (GlcNAc...) asparagine) is linked at asparagine 230. Ca(2+) is bound at residue glutamate 235. N-linked (GlcNAc...) asparagine glycosylation is present at asparagine 271. Ca(2+) is bound by residues phenylalanine 290 and glutamate 291. A glycan (N-linked (GlcNAc...) asparagine) is linked at asparagine 303. Aspartate 306 serves as a coordination point for Ca(2+). Glutamate 332 contributes to the Mg(2+) binding site. Residues aspartate 337, histidine 341, aspartate 378, and histidine 379 each coordinate Zn(2+). A glycan (N-linked (GlcNAc...) asparagine) is linked at asparagine 430. Histidine 454 serves as a coordination point for Zn(2+). The cysteines at positions 489 and 497 are disulfide-linked. Serine 501 carries GPI-anchor amidated serine lipidation. Residues serine 502–phenylalanine 524 constitute a propeptide, removed in mature form.

It belongs to the alkaline phosphatase family. As to quaternary structure, homodimer. It depends on Mg(2+) as a cofactor. The cofactor is Zn(2+). Requires Ca(2+) as cofactor. N-glycosylated.

It localises to the cell membrane. Its subcellular location is the extracellular vesicle membrane. The protein localises to the mitochondrion membrane. The protein resides in the mitochondrion intermembrane space. The enzyme catalyses a phosphate monoester + H2O = an alcohol + phosphate. It carries out the reaction diphosphate + H2O = 2 phosphate + H(+). The catalysed reaction is pyridoxal 5'-phosphate + H2O = pyridoxal + phosphate. It catalyses the reaction phosphoethanolamine + H2O = ethanolamine + phosphate. The enzyme catalyses N-phosphocreatine + H2O = creatine + phosphate. It carries out the reaction ATP + H2O = ADP + phosphate + H(+). The catalysed reaction is ADP + H2O = AMP + phosphate + H(+). It catalyses the reaction AMP + H2O = adenosine + phosphate. Phosphatase activity is specifically inhibited by 5-((5-chloro-2-methoxyphenyl)sulfonamido)nicotinamide (SBI-425). Functionally, alkaline phosphatase that metabolizes various phosphate compounds and plays a key role in skeletal mineralization and adaptive thermogenesis. Has broad substrate specificity and can hydrolyze a considerable variety of compounds: however, only a few substrates, such as diphosphate (inorganic pyrophosphate; PPi), pyridoxal 5'-phosphate (PLP) and N-phosphocreatine are natural substrates. Plays an essential role in skeletal and dental mineralization via its ability to hydrolyze extracellular diphosphate, a potent mineralization inhibitor, to phosphate: it thereby promotes hydroxyapatite crystal formation and increases inorganic phosphate concentration. Acts in a non-redundant manner with PHOSPHO1 in skeletal mineralization: while PHOSPHO1 mediates the initiation of hydroxyapatite crystallization in the matrix vesicles (MVs), ALPL/TNAP catalyzes the spread of hydroxyapatite crystallization in the extracellular matrix. Also promotes dephosphorylation of osteopontin (SSP1), an inhibitor of hydroxyapatite crystallization in its phosphorylated state; it is however unclear whether ALPL/TNAP mediates SSP1 dephosphorylation via a direct or indirect manner. Catalyzes dephosphorylation of PLP to pyridoxal (PL), the transportable form of vitamin B6, in order to provide a sufficient amount of PLP in the brain, an essential cofactor for enzymes catalyzing the synthesis of diverse neurotransmitters. Additionally, also able to mediate ATP degradation in a stepwise manner to adenosine, thereby regulating the availability of ligands for purinergic receptors. Also capable of dephosphorylating microbial products, such as lipopolysaccharides (LPS) as well as other phosphorylated small-molecules, such as poly-inosine:cytosine (poly I:C). Acts as a key regulator of adaptive thermogenesis as part of the futile creatine cycle: localizes to the mitochondria of thermogenic fat cells and acts by mediating hydrolysis of N-phosphocreatine to initiate a futile cycle of creatine dephosphorylation and phosphorylation. During the futile creatine cycle, creatine and N-phosphocreatine are in a futile cycle, which dissipates the high energy charge of N-phosphocreatine as heat without performing any mechanical or chemical work. The sequence is that of Alkaline phosphatase, tissue-nonspecific isozyme (Alpl) from Rattus norvegicus (Rat).